Here is a 228-residue protein sequence, read N- to C-terminus: MDVLLSLLSEFGFERLSSELSLPIVVHSVPGGGKSSLIRKLINKDRRFSAYTFGLEDCESITGVRIKKAHASIPRSEFVVFDEYIEGDTPPWAFAVFADPLQGGPGPVLRAHFIKRRSHRFGKCTAQLLNDLSYEVESDLADVVQIQGLYETDLQGTVVYYEACVGNLLRAHSVPAYYISEIRGQTFESVTFVTSENYPVDRALAFQCLTRHRSSLLILSPNATYTAS.

Residues 1 to 132 enclose the (+)RNA virus helicase ATP-binding domain; the sequence is MDVLLSLLSE…KCTAQLLNDL (132 aa). Residues 133–228 form the (+)RNA virus helicase C-terminal domain; sequence SYEVESDLAD…LSPNATYTAS (96 aa).

The protein belongs to the Tymovirales TGBp1 protein family. As to quaternary structure, homodimer and homooligomer. Interacts with capsid protein. Interacts with host AGO1; this interaction targets the host protein for degradation, thereby suppressing the antiviral RNA silencing.

It localises to the host cytoplasm. Functionally, transports viral genome to neighboring plant cells directly through plasmosdesmata, without any budding. The movement protein allows efficient cell to cell propagation, by bypassing the host cell wall barrier. Increases plasmodesma size exclusion limit. Acts as a suppressor of RNA-mediated gene silencing, also known as post-transcriptional gene silencing (PTGS), a mechanism of plant viral defense that limits the accumulation of viral RNAs. The sequence is that of Movement and silencing protein TGBp1 from Lilium (LSV).